Consider the following 195-residue polypeptide: Phosphoheptose isomerase (195 aa).

Residues 35–195 enclose the SIS domain; it reads LCVALYRGDK…EKEIFGDGVN (161 aa). 51–53 serves as a coordination point for substrate; sequence NGG. Zn(2+) contacts are provided by His-60 and Glu-64. Substrate-binding positions include Glu-64, 93 to 94, 119 to 121, Ser-124, and Gln-171; these read ND and STS. Zn(2+) contacts are provided by Gln-171 and His-179.

Belongs to the SIS family. GmhA subfamily. Homotetramer. It depends on Zn(2+) as a cofactor.

It localises to the cytoplasm. The catalysed reaction is 2 D-sedoheptulose 7-phosphate = D-glycero-alpha-D-manno-heptose 7-phosphate + D-glycero-beta-D-manno-heptose 7-phosphate. It functions in the pathway carbohydrate biosynthesis; D-glycero-D-manno-heptose 7-phosphate biosynthesis; D-glycero-alpha-D-manno-heptose 7-phosphate and D-glycero-beta-D-manno-heptose 7-phosphate from sedoheptulose 7-phosphate: step 1/1. Functionally, catalyzes the isomerization of sedoheptulose 7-phosphate in D-glycero-D-manno-heptose 7-phosphate. The polypeptide is Phosphoheptose isomerase (Sulfurimonas denitrificans (strain ATCC 33889 / DSM 1251) (Thiomicrospira denitrificans (strain ATCC 33889 / DSM 1251))).